The following is a 214-amino-acid chain: Large ribosomal subunit protein uL16 (214 aa).

Position 32 is a citrulline (Arg32). Lys175 is covalently cross-linked (Glycyl lysine isopeptide (Lys-Gly) (interchain with G-Cter in SUMO2)). Residue Lys188 forms a Glycyl lysine isopeptide (Lys-Gly) (interchain with G-Cter in ubiquitin) linkage.

Belongs to the universal ribosomal protein uL16 family. Component of the large ribosomal subunit. Mature ribosomes consist of a small (40S) and a large (60S) subunit. The 40S subunit contains about 33 different proteins and 1 molecule of RNA (18S). The 60S subunit contains about 49 different proteins and 3 molecules of RNA (28S, 5.8S and 5S). Post-translationally, citrullinated by PADI4. In terms of processing, ufmylated by UFL1.

The protein localises to the cytoplasm. In terms of biological role, component of the large ribosomal subunit. Plays a role in the formation of actively translating ribosomes. May play a role in the embryonic brain development. The sequence is that of Large ribosomal subunit protein uL16 from Pongo abelii (Sumatran orangutan).